The chain runs to 414 residues: Argininosuccinate synthase (414 aa).

Residues 15–23 and A42 each bind ATP; that span reads AYSGGLDTS. L-citrulline contacts are provided by Y93 and S98. G123 contacts ATP. Positions 125, 129, and 130 each coordinate L-aspartate. An L-citrulline-binding site is contributed by N129. Residues R133, S182, S191, E267, and Y279 each coordinate L-citrulline.

Belongs to the argininosuccinate synthase family. Type 1 subfamily. Homotetramer.

Its subcellular location is the cytoplasm. The enzyme catalyses L-citrulline + L-aspartate + ATP = 2-(N(omega)-L-arginino)succinate + AMP + diphosphate + H(+). It participates in amino-acid biosynthesis; L-arginine biosynthesis; L-arginine from L-ornithine and carbamoyl phosphate: step 2/3. This chain is Argininosuccinate synthase, found in Deinococcus geothermalis (strain DSM 11300 / CIP 105573 / AG-3a).